We begin with the raw amino-acid sequence, 1033 residues long: MAKVRVYELAKEFGVESKVVMAKLQELGEFVRSASSTIEAPVVRKLTDAFQQGGGNGRSAGRPAAPKKAAPRPSAPSPAQAGPSQAAPAAGDRAAAPRPSAAPKAPAAQQPAAPSAPAPAPSQGPRPTPGPKPAPRPAPAAPEFTAPPAAPAAPSTPAPAPSGPKPGGARPGAPKPGGARPSGPGQDRGQQGGQGRPGGQRPGAPAQRPGGRPGGPRPGNNPFTSGGNAGMARPSAPRPQGGPRPGGPGGAPGGGPRPQGPGGQGGGPRPQAPGGNRPSPGSMPRPQGGGAGPRPGGGPRPNPGMMPQRPAAGPRPGPGGGGRGPGGAGRPGGGGGRPGGGGFAGRPGGGGGGRPGGGGGFAGRPGGGGGFGGGGGRPGFGGRPGGPGGRGGTQGAFGRPGGPARRGRKSKRQRRQEYEAMQAPSVGGVMLPRGNGETIRLSRGASLTDFAEKINANPASLVAVMMNLGEMVTATQSVSDETLHLLAGEMNYTVQIVSPEEEDRELLESFDLEFGEDEGSEEDLVVRPPVVTVMGHVDHGKTRLLDAIRKTNVIAGEAGGITQHIGAYQVATEVNDEERKITFIDTPGHEAFTAMRARGARSTDIAILVVAANDGVMPQTVEALNHAKAAEVPIVVAVNKIDVEGADPTKVRGQLTEYGLVAEEYGGDTMFVDISAKQGLHIDSLLEAVVLTADASLDLRANPVQDAQGISIESRLDRGRGAVATVLVQRGTLRVGDTMVVGDAYGRVRAMLDDNGNNVAEAGPSTPVQVLGLTNVPGAGDNFIVVEEDRTARQIAEKRAARERNAAFAKRTRRVSLEDLDKVLKAGEVQQLNLIIKGDASGSVEALESSLLQLDVGEEVDIRVLHRGVGAVTESDIDLAMGSDAIVIGFNVRAAGRAAQMAEREGVDVRYYSVIYQAIEEIEAALKGMLKPEYEEVELGTAEIREVFRSSKLGNIAGVLIRSGEVKRNTKARLLRDGKVIAENLNIEGLRRFKDDVTEIREGFEGGINLGNFNDIKVDDVIATYEMREKPRV.

The segment at 49 to 432 is disordered; the sequence is AFQQGGGNGR…APSVGGVMLP (384 aa). Residues 59 to 113 are compositionally biased toward low complexity; sequence SAGRPAAPKKAAPRPSAPSPAQAGPSQAAPAAGDRAAAPRPSAAPKAPAAQQPAA. 2 stretches are compositionally biased toward pro residues: residues 114–140 and 148–164; these read PSAP…PAPA and PAAP…PSGP. Low complexity predominate over residues 171 to 189; it reads PGAPKPGGARPSGPGQDRG. The segment covering 190–201 has biased composition (gly residues); sequence QQGGQGRPGGQR. Positions 236–246 are enriched in pro residues; sequence APRPQGGPRPG. Residues 247 to 268 are compositionally biased toward gly residues; the sequence is GPGGAPGGGPRPQGPGGQGGGP. Low complexity predominate over residues 305–314; the sequence is MMPQRPAAGP. Gly residues predominate over residues 318–401; it reads PGGGGRGPGG…GTQGAFGRPG (84 aa). Positions 405–414 are enriched in basic residues; sequence RRGRKSKRQR. Residues 526–698 form the tr-type G domain; that stretch reads VRPPVVTVMG…VVLTADASLD (173 aa). The G1 stretch occupies residues 535–542; it reads GHVDHGKT. Position 535–542 (535–542) interacts with GTP; the sequence is GHVDHGKT. Residues 560–564 are G2; the sequence is GITQH. Residues 585-588 form a G3 region; sequence DTPG. GTP is bound by residues 585–589 and 639–642; these read DTPGH and NKID. Residues 639–642 form a G4 region; the sequence is NKID. Residues 675 to 677 are G5; that stretch reads SAK.

This sequence belongs to the TRAFAC class translation factor GTPase superfamily. Classic translation factor GTPase family. IF-2 subfamily.

The protein resides in the cytoplasm. One of the essential components for the initiation of protein synthesis. Protects formylmethionyl-tRNA from spontaneous hydrolysis and promotes its binding to the 30S ribosomal subunits. Also involved in the hydrolysis of GTP during the formation of the 70S ribosomal complex. This Streptomyces coelicolor (strain ATCC BAA-471 / A3(2) / M145) protein is Translation initiation factor IF-2.